The chain runs to 257 residues: Putative carboxymethylenebutenolidase (257 aa).

Catalysis depends on residues cysteine 148, aspartate 195, and histidine 226.

This sequence belongs to the dienelactone hydrolase family.

It carries out the reaction 2-(5-oxo-2,5-dihydrofuran-2-ylidene)acetate + H2O = 4-oxohex-2-enedioate + H(+). The sequence is that of Putative carboxymethylenebutenolidase from Saccharolobus solfataricus (strain ATCC 35092 / DSM 1617 / JCM 11322 / P2) (Sulfolobus solfataricus).